Consider the following 336-residue polypeptide: UPF0324 membrane protein BT_1919 (336 aa).

The next 8 membrane-spanning stretches (helical) occupy residues 2 to 19 (LHGV…FYIG), 23 to 45 (FVRS…YANS), 85 to 107 (IGLP…GIYL), 117 to 134 (IALL…AAIL), 147 to 169 (TAVS…PFLY), 210 to 232 (AIIV…TYLV), 253 to 275 (WFAI…AQLV), and 310 to 332 (FVLA…KYLT).

It belongs to the UPF0324 family.

It localises to the cell membrane. The sequence is that of UPF0324 membrane protein BT_1919 from Bacteroides thetaiotaomicron (strain ATCC 29148 / DSM 2079 / JCM 5827 / CCUG 10774 / NCTC 10582 / VPI-5482 / E50).